A 355-amino-acid chain; its full sequence is Probable dual-specificity RNA methyltransferase RlmN (355 aa).

The interval 1–20 (MSATPVTQLTPSSQPQQPCS) is disordered. The Proton acceptor role is filled by Glu-107. The 229-residue stretch at 113-341 (TDKRLTVCVS…VSVRYSRGLE (229 aa)) folds into the Radical SAM core domain. Cys-120 and Cys-346 are oxidised to a cystine. Residues Cys-127, Cys-131, and Cys-134 each coordinate [4Fe-4S] cluster. Residues 174–175 (GE), Ser-204, 227–229 (SLH), and Asn-303 contribute to the S-adenosyl-L-methionine site. The active-site S-methylcysteine intermediate is the Cys-346.

Belongs to the radical SAM superfamily. RlmN family. The cofactor is [4Fe-4S] cluster.

It is found in the cytoplasm. The enzyme catalyses adenosine(2503) in 23S rRNA + 2 reduced [2Fe-2S]-[ferredoxin] + 2 S-adenosyl-L-methionine = 2-methyladenosine(2503) in 23S rRNA + 5'-deoxyadenosine + L-methionine + 2 oxidized [2Fe-2S]-[ferredoxin] + S-adenosyl-L-homocysteine. It carries out the reaction adenosine(37) in tRNA + 2 reduced [2Fe-2S]-[ferredoxin] + 2 S-adenosyl-L-methionine = 2-methyladenosine(37) in tRNA + 5'-deoxyadenosine + L-methionine + 2 oxidized [2Fe-2S]-[ferredoxin] + S-adenosyl-L-homocysteine. In terms of biological role, specifically methylates position 2 of adenine 2503 in 23S rRNA and position 2 of adenine 37 in tRNAs. This is Probable dual-specificity RNA methyltransferase RlmN from Nostoc sp. (strain PCC 7120 / SAG 25.82 / UTEX 2576).